The chain runs to 175 residues: MEPLKVSGSGGIPMKTRLNIILEKSINKILIILGLLLIASTVITITLTVEYIRVENELQLCKMGAEVAKTTLEPPAQPTKTTPTLTSTRSTTATFKTRPVSRTNHHTNPSCWREEEKCQNITAKWSNCFGTFLPVRVNCTVLRELCDEQLGNHTTVQVSKRCTCIYALNWDCSYA.

The Intravirion segment spans residues 1–28; that stretch reads MEPLKVSGSGGIPMKTRLNIILEKSINK. The chain crosses the membrane as a helical; Signal-anchor for type II membrane protein span at residues 29 to 49; it reads ILIILGLLLIASTVITITLTV. Over 50-175 the chain is Virion surface; that stretch reads EYIRVENELQ…YALNWDCSYA (126 aa). A disordered region spans residues 73-108; that stretch reads EPPAQPTKTTPTLTSTRSTTATFKTRPVSRTNHHTN. The span at 78–98 shows a compositional bias: low complexity; sequence PTKTTPTLTSTRSTTATFKTR. N120, N138, and N152 each carry an N-linked (GlcNAc...) asparagine; by host glycan.

This sequence belongs to the metapneumovirus small hydrophobic protein family. In terms of assembly, homooligomer. Interacts with glycoprotein G. In terms of processing, tyrosine phosphorylated.

It is found in the virion membrane. The protein localises to the host cell membrane. Viroporin that forms a ion channel probably displaying low ion selectivity. Plays a role in counteracting host innate immunity by inhibiting TLR7/MyD88/TRAF6 signaling and STAT1 phosphorylation, leading to down-regulation of type-I IFN. The chain is Small hydrophobic protein (SH) from Avian metapneumovirus (isolate Canada goose/Minnesota/15a/2001) (AMPV).